Here is an 819-residue protein sequence, read N- to C-terminus: Advillin (819 aa).

The interval 1-731 (MSLSSAFRAV…YEQLKNELGD (731 aa)) is core. Residues 24-73 (MELALVPLSAHGNFYEGDCYIVLSTRRVGSLLSQNIHFWIGKDSSQDEQS) form a Gelsolin-like 1 repeat. Tyr-85 bears the Phosphotyrosine mark. A 1,2-diacyl-sn-glycero-3-phospho-(1D-myo-inositol-4,5-bisphosphate) contacts are provided by residues 109-116 (KQGIIYKK) and 135-143 (RLLHVKGKR). Gelsolin-like repeat units lie at residues 145–185 (IQAT…GERL), 262–306 (LSVT…VEKQ), 403–454 (ENLE…DELA), 525–565 (TKAV…DERA), and 628–669 (FLVT…TEKK). Positions 628–819 (FLVTEVTDFT…LQLKKERGLF (192 aa)) are required for interaction with F-actin. Residues 732 to 819 (ATAIVRITAD…LQLKKERGLF (88 aa)) are headpiece. Residues Tyr-748 and Tyr-758 each carry the phosphotyrosine modification. The 67-residue stretch at 753–819 (DGEPKYYPVE…LQLKKERGLF (67 aa)) folds into the HP domain.

This sequence belongs to the villin/gelsolin family. Associates (via C-terminus) with actin. Interacts with F-actin. Interacts with SCARF1; the interaction occurs in embryonic dorsal root ganglions at 18 dpc and induces neurite-like outgrowth. Interacts with PLCE1. Interacts with ACTR2 and ACTR3; associates with the ARP2/3 complex. Most highly expressed in the endometrium of the uterus, the intestinal villi and the testes. Weaker expression also detected in the brain, dorsal root ganglions and on the surface of the tongue.

It is found in the cytoplasm. The protein resides in the cytoskeleton. The protein localises to the cell projection. Its subcellular location is the lamellipodium. It localises to the cell junction. It is found in the focal adhesion. The protein resides in the neuron projection. The protein localises to the axon. Its function is as follows. Ca(2+)-regulated actin-binding protein which plays an important role in actin bundling. May have a unique function in the morphogenesis of neuronal cells which form ganglia. Required for SREC1-mediated regulation of neurite-like outgrowth. Plays a role in regenerative sensory axon outgrowth and remodeling processes after peripheral injury in neonates. Involved in the formation of long fine actin-containing filopodia-like structures in fibroblast. Plays a role in ciliogenesis. In podocytes, controls lamellipodia formation through the regulation of EGF-induced diacylglycerol generation by PLCE1 and ARP2/3 complex assembly. The protein is Advillin of Mus musculus (Mouse).